The primary structure comprises 244 residues: Small ribosomal subunit protein uS2 (244 aa).

Belongs to the universal ribosomal protein uS2 family.

The chain is Small ribosomal subunit protein uS2 from Exiguobacterium sibiricum (strain DSM 17290 / CCUG 55495 / CIP 109462 / JCM 13490 / 255-15).